Consider the following 840-residue polypeptide: Leucine--tRNA ligase (840 aa).

Residues Pro-44–His-55 carry the 'HIGH' region motif. The 'KMSKS' region motif lies at Lys-617–Ser-621. Lys-620 provides a ligand contact to ATP.

This sequence belongs to the class-I aminoacyl-tRNA synthetase family.

Its subcellular location is the cytoplasm. It catalyses the reaction tRNA(Leu) + L-leucine + ATP = L-leucyl-tRNA(Leu) + AMP + diphosphate. The chain is Leucine--tRNA ligase from Borreliella burgdorferi (strain ZS7) (Borrelia burgdorferi).